The primary structure comprises 3021 residues: Genome polyprotein (3021 aa).

The residue at position 2 (serine 2) is an N-acetylserine; by host. Positions 2-23 (STLPKPQRKTKRNTIRRPQDVK) are interaction with STAT1. Residues 2-58 (STLPKPQRKTKRNTIRRPQDVKFPGGGQIVGGVYVLPRRGPRLGVRATRKTSERSQP) form an interaction with EIF2AK2/PKR region. An interaction with DDX3X region spans residues 2–59 (STLPKPQRKTKRNTIRRPQDVKFPGGGQIVGGVYVLPRRGPRLGVRATRKTSERSQPR). Residues 2–75 (STLPKPQRKT…PKARRSEGRS (74 aa)) form a disordered region. Over 2 to 168 (STLPKPQRKT…EDGINFATGN (167 aa)) the chain is Cytoplasmic. Short sequence motifs (nuclear localization signal) lie at residues 5-13 (PKPQRKTKR) and 38-43 (PRRGPR). Residues 7 to 16 (PQRKTKRNTI) show a composition bias toward basic residues. Position 53 is a phosphoserine; by host (serine 53). 2 consecutive short sequence motifs (nuclear localization signal) follow at residues 58 to 64 (PRGRRQP) and 66 to 71 (PKARRS). Positions 58 to 68 (PRGRRQPIPKA) are enriched in basic residues. Position 99 is a phosphoserine; by host (serine 99). Positions 112-152 (PRRRSRNLGKVIDTLTCGFADLMGYIPLVGAPVGGVARALA) are important for endoplasmic reticulum and mitochondrial localization. Residue serine 116 is modified to Phosphoserine; by host PKA. The tract at residues 122–173 (VIDTLTCGFADLMGYIPLVGAPVGGVARALAHGVRALEDGINFATGNLPGCS) is interaction with APOA2. The interval 164-167 (FATG) is important for lipid droplets localization. The helical transmembrane segment at 169–189 (LPGCSFSIFLLALFSCLIHPA) threads the bilayer. Residues 178–191 (LLALFSCLIHPAAS) constitute a propeptide, ER anchor for the core protein, removed in mature form by host signal peptidase. Topologically, residues 190–358 (ASLEWRNTSG…AGAHWGILAG (169 aa)) are lumenal. N-linked (GlcNAc...) asparagine; by host glycosylation is found at asparagine 196, asparagine 209, and asparagine 234. An important for fusion region spans residues 265 to 296 (LVGAATMCSALYVGDMCGAVFLVGQAFTFRPR). N-linked (GlcNAc...) asparagine; by host glycosylation occurs at asparagine 305. The helical transmembrane segment at 359–379 (LAYYSMQGNWAKVAIIMVMFS) threads the bilayer. Topologically, residues 380–731 (GVDAHTYTTG…WEFVILVFLL (352 aa)) are lumenal. Positions 385–412 (TYTTGGTASRHTQAFAGLFDIGPQQKLQ) are HVR1. Asparagine 417, asparagine 423, and asparagine 430 each carry an N-linked (GlcNAc...) (high mannose) asparagine; by host glycan. Disulfide bonds link cysteine 429–cysteine 553, cysteine 452–cysteine 459, cysteine 487–cysteine 495, and cysteine 504–cysteine 509. N-linked (GlcNAc...) asparagine; by host glycosylation occurs at asparagine 448. Residues 474-479 (DANITG) form an HVR2 region. A glycan (N-linked (GlcNAc...) asparagine; by host) is linked at asparagine 476. Residues 481–494 (SDDRPYCWHYAPRP) form a CD81-binding 1 region. Asparagine 533 carries an N-linked (GlcNAc...) asparagine; by host glycan. Residues 545–552 (PPSGRWFG) form a CD81-binding 2 region. Asparagine 557 carries an N-linked (GlcNAc...) asparagine; by host glycan. Cysteine 565 and cysteine 570 are joined by a disulfide. N-linked (GlcNAc...) asparagine; by host glycosylation occurs at asparagine 578. 3 disulfides stabilise this stretch: cysteine 587–cysteine 591, cysteine 603–cysteine 626, and cysteine 613–cysteine 650. The N-linked (GlcNAc...) (high mannose) asparagine; by host glycan is linked to asparagine 651. Cysteines 658 and 683 form a disulfide. Positions 666 to 677 (SEQHPLLHSTTE) are PKR/eIF2-alpha phosphorylation homology domain (PePHD). Residues 732–752 (LADARVCVALWLMLMISQTEA) form a helical membrane-spanning segment. The Lumenal portion of the chain corresponds to 753 to 763 (ALENLVTLNAV). Residues 764-784 (AAAGTHGIGWYLVAFCAAWYV) form a helical membrane-spanning segment. Residues 785–787 (RGK) lie on the Cytoplasmic side of the membrane. Residues 788 to 809 (LVPLVTYSLTGLWSLALLVLLL) traverse the membrane as a helical segment. The Lumenal portion of the chain corresponds to 810 to 819 (PQRAYAWSGE). Residues 820-840 (DSATLGAGVLVLFGFFTLSPW) form a helical membrane-spanning segment. The Cytoplasmic portion of the chain corresponds to 841 to 844 (YKHW). The helical transmembrane segment at 845 to 864 (IGRLMWWNQYTICRCESALH) threads the bilayer. The Lumenal segment spans residues 865–887 (VWVPPLLARGSRDGVILLTSLLY). The helical transmembrane segment at 888–908 (PSLIFDITKLLMAVLGPLYLI) threads the bilayer. The Peptidase C18 domain maps to 905-1032 (LYLIQATITT…DYREMGWRLL (128 aa)). Residues 909-1663 (QATITTTPYF…CMSADLEVTT (755 aa)) lie on the Cytoplasmic side of the membrane. The segment at 910-1212 (ATITTTPYFV…PVETLSTQAR (303 aa)) is protease NS2-3. Cysteine 928 is lipidated: S-palmitoyl cysteine; by host. Residues 935 to 955 (IGGKYFQMIILSIGRWFNTYL) form an interaction with host SCPS1 region. Active-site for protease NS2 activity; shared with dimeric partner residues include histidine 958, glutamate 978, and cysteine 999. The Peptidase S29 domain maps to 1033 to 1214 (APITAYAQQT…ETLSTQARSP (182 aa)). Catalysis depends on charge relay system; for serine protease NS3 activity residues histidine 1089 and aspartate 1113. Residues cysteine 1129 and cysteine 1131 each contribute to the Zn(2+) site. Serine 1171 acts as the Charge relay system; for serine protease NS3 activity in catalysis. Cysteine 1177 and histidine 1181 together coordinate Zn(2+). In terms of domain architecture, Helicase ATP-binding spans 1223 to 1375 (PAVPQSYQVG…SNIEEVALGS (153 aa)). 1236-1243 (APTGSGKS) contacts ATP. 2 residues coordinate Mg(2+): serine 1243 and glutamate 1323. The DECH box signature appears at 1322 to 1325 (DECH). Residues 1382–1544 (YGKAIPIALL…DLQPAETTVR (163 aa)) form the Helicase C-terminal domain. The segment at 1492–1504 (QRRGRTGRGRLGT) is RNA-binding. The chain crosses the membrane as a helical span at residues 1664–1684 (STWVLLGGVLAALAAYCLSVG). The NS3-binding stretch occupies residues 1685–1696 (CVVIVGHIELEG). The Cytoplasmic portion of the chain corresponds to 1685–1811 (CVVIVGHIEL…SVTSPLTTNQ (127 aa)). The helical transmembrane segment at 1812 to 1830 (TMFFNILGGWVATHLAGPQ) threads the bilayer. Residues 1831 to 1834 (SSSA) lie on the Lumenal side of the membrane. A helical transmembrane segment spans residues 1835–1855 (FVVSGLAGAAIGGIGLGRVLL). A topological domain (cytoplasmic) is located at residue aspartate 1856. A helical transmembrane segment spans residues 1857–1877 (ILAGYGAGVSGALVAFKIMGG). Residues 1878–1887 (ECPTAEDMVN) lie on the Lumenal side of the membrane. A helical membrane pass occupies residues 1888-1908 (LLPAILSPGALVVGVICAAIL). The Cytoplasmic portion of the chain corresponds to 1909-1978 (RRHVGPGEGA…WINEDYPSPC (70 aa)). Residue cysteine 1978 is the site of S-palmitoyl cysteine; by host attachment. The stretch at 1979–2008 (SDDWLRTIWDWVCSVLADFKAWLSAKIMPA) is an intramembrane region. Residues 2009–3000 (LPGLPFISCQ…YHSVSRARTR (992 aa)) lie on the Cytoplasmic side of the membrane. 4 residues coordinate Zn(2+): cysteine 2017, cysteine 2035, cysteine 2037, and cysteine 2058. The segment at 2126-2214 (EFFTEVDGVR…ASSSASQLSA (89 aa)) is FKBP8-binding. The tract at residues 2126–2338 (EFFTEVDGVR…PVPPPRRKRT (213 aa)) is transcriptional activation. An interaction with non-structural protein 4A region spans residues 2141–2145 (PPCKP). A disordered region spans residues 2193–2215 (ARRLARGSPPSEASSSASQLSAP). The tract at residues 2195 to 2448 (RLARGSPPSE…ALITPCSAEE (254 aa)) is interaction with host SKP2. Phosphoserine; by host is present on residues serine 2200, serine 2203, serine 2207, serine 2210, serine 2213, and serine 2216. Residues 2200-2215 (SPPSEASSSASQLSAP) show a composition bias toward low complexity. Positions 2216 to 2255 (SLKATCQTHRPHPDAELVDANLLWRQEMGSNITRVESETK) are ISDR. The interval 2216 to 2281 (SLKATCQTHR…VEPSVAAECF (66 aa)) is interaction with EIF2AK2/PKR. Residues 2255–2312 (KVVVLDSFEPLRAETDDVEPSVAAECFKKPPKYPPALPIWARPDYNPPLLDRWKAPDY) are NS4B-binding. The tract at residues 2305 to 2387 (DRWKAPDYVP…STTSKVPPSP (83 aa)) is V3. Positions 2328 to 2331 (PPVP) match the SH3-binding motif. The Nuclear localization signal signature appears at 2333-2341 (PRRKRTIQL). A Glycyl lysine isopeptide (Lys-Gly) (interchain with G-Cter in ubiquitin) cross-link involves residue lysine 2356. The disordered stretch occupies residues 2356–2417 (KSFPSSKPQE…DPDLSCDSWS (62 aa)). 2 stretches are compositionally biased toward low complexity: residues 2359 to 2381 (PSSK…STTS) and 2388 to 2401 (GGES…SMPP). A phosphoserine; by host mark is found at serine 2459 and serine 2472. The region spanning 2644 to 2762 (PLGFSYDTRC…VAESDGVDED (119 aa)) is the RdRp catalytic domain. Aspartate 2650, aspartate 2748, and aspartate 2749 together coordinate Mg(2+). The chain crosses the membrane as a helical span at residues 3001-3021 (HLLLCLLLLTVGVGIFLLPAR).

The protein belongs to the hepacivirus polyprotein family. As to quaternary structure, homooligomer. Interacts with E1 (via C-terminus). Interacts with the non-structural protein 5A. Interacts (via N-terminus) with host STAT1 (via SH2 domain); this interaction results in decreased STAT1 phosphorylation and ubiquitin-mediated proteasome-dependent STAT1 degradation, leading to decreased IFN-stimulated gene transcription. Interacts with host STAT3; this interaction constitutively activates STAT3. Interacts with host LTBR receptor. Interacts with host TNFRSF1A receptor and possibly induces apoptosis. Interacts with host HNRPK. Interacts with host YWHAE. Interacts with host UBE3A/E6AP. Interacts with host DDX3X. Interacts with host APOA2. Interacts with host RXRA protein. Interacts with host SP110 isoform 3/Sp110b; this interaction sequesters the transcriptional corepressor SP110 away from the nucleus. Interacts with host CREB3 nuclear transcription protein; this interaction triggers cell transformation. Interacts with host ACY3. Interacts with host C1QR1. Interacts with host RBM24; this interaction, which enhances the interaction of the mature core protein with 5'-UTR, may inhibit viral translation and favor replication. Interacts with host EIF2AK2/PKR; this interaction induces the autophosphorylation of EIF2AK2. Part of the viral assembly initiation complex composed of NS2, E1, E2, NS3, NS4A, NS5A and the mature core protein. Forms a heterodimer with envelope glycoprotein E2. Interacts with mature core protein. Interacts with protease NS2. The heterodimer E1/E2 interacts with host CLDN1; this interaction plays a role in viral entry into host cell. Interacts with host SPSB2 (via C-terminus). Part of the viral assembly initiation complex composed of NS2, E1, E2, NS3, NS4A, NS5A and the mature core protein. Interacts with host NEURL3; this interaction prevents E1 binding to glycoprotein E2. In terms of assembly, forms a heterodimer with envelope glycoprotein E1. Interacts with host CD81 and SCARB1 receptors; these interactions play a role in viral entry into host cell. Interacts with host EIF2AK2/PKR; this interaction inhibits EIF2AK2 and probably allows the virus to evade the innate immune response. Interacts with host CD209/DC-SIGN and CLEC4M/DC-SIGNR. Interact with host SPCS1; this interaction is essential for viral particle assembly. Interacts with protease NS2. The heterodimer E1/E2 interacts with host CLDN1; this interaction plays a role in viral entry into host cell. Part of the viral assembly initiation complex composed of NS2, E1, E2, NS3, NS4A, NS5A and the mature core protein. Interacts with host SLC3A2/4F2hc; the interaction may facilitate viral entry into host cell. Interacts with human PLSCR1. As to quaternary structure, homohexamer. Homoheptamer. Interacts with protease NS2. Homodimer. Interacts with host SPCS1; this interaction is essential for viral particle assembly. Interacts with envelope glycoprotein E1. Interacts with envelope glycoprotein E2. Interacts with viroporin p7. Interacts with serine protease/helicase NS3. Part of the replication complex composed of NS2, NS3, NS4A, NS4B, NS5A and the RNA-directed RNA polymerase embedded in an ER-derived membranous web. Part of the viral assembly initiation complex composed of NS2, E1, E2, NS3, NS4A, NS5A and the mature core protein. In terms of assembly, interacts with protease NS2. Interacts with non-structural protein 4A; this interaction stabilizes the folding of NS3 serine protease. NS3-NS4A interaction is essential for NS3 activation and allows membrane anchorage of the latter. NS3/NS4A complex also prevents phosphorylation of host IRF3, thus preventing the establishment of dsRNA induced antiviral state. Interacts with host MAVS; this interaction leads to the cleavage and inhibition of host MAVS. Interacts with host TICAM1; this interaction leads to the cleavage and inhibition of host TICAM1. Interacts with host TANK-binding kinase/TBK1; this interaction results in the inhibition of the association between TBK1 and IRF3, which leads to the inhibition of IRF3 activation. Interacts with host RBM24. Part of the replication complex composed of NS2, NS3, NS4A, NS4B, NS5A and the RNA-directed RNA polymerase embedded in an ER-derived membranous web. Part of the viral assembly initiation complex composed of NS2, E1, E2, NS3, NS4A, NS5A and the mature core protein. As to quaternary structure, interacts with NS3 serine protease; this interaction stabilizes the folding of NS3 serine protease. NS3-NS4A interaction is essential for NS3 activation and allows membrane anchorage of the latter. Interacts with non-structural protein 5A (via N-terminus). Part of the replication complex composed of NS2, NS3, NS4A, NS4B, NS5A and the RNA-directed RNA polymerase embedded in an ER-derived membranous web. Part of the viral assembly initiation complex composed of NS2, E1, E2, NS3, NS4A, NS5A and the mature core protein. Homomultimer. Interacts with non-structural protein NS5A. Interacts with host PLA2G4C; this interaction likely initiates the recruitment of replication complexes to lipid droplets. Interacts with host STING; this interaction disrupts the interaction between STING and TBK1 thereby suppressing the interferon signaling. Part of the replication complex composed of NS2, NS3, NS4A, NS4B, NS5A and the RNA-directed RNA polymerase embedded in an ER-derived membranous web. In terms of assembly, monomer. Homodimer; dimerization is required for RNA-binding. Interacts with the mature core protein. Interacts (via N-terminus) with non-structural protein 4A. Interacts with non-structural protein 4B. Interacts (via region D2) with RNA-directed RNA polymerase. Part of the viral assembly initiation complex composed of NS2, E1, E2, NS3, NS4A, NS5A and the mature core protein. Part of the replication complex composed of NS2, NS3, NS4A, NS4B, NS5A and the RNA-directed RNA polymerase embedded in an ER-derived membranous web. Interacts with host GRB2. Interacts with host BIN1. Interacts with host PIK3R1. Interacts with host SRCAP. Interacts with host FKBP8. Interacts (via C-terminus) with host VAPB (via MSP domain). Interacts with host EIF2AK2/PKR; this interaction leads to disruption of EIF2AK2 dimerization by NS5A and probably allows the virus to evade the innate immune response. Interacts (via N-terminus) with host PACSIN2 (via N-terminus); this interaction attenuates protein kinase C alpha-mediated phosphorylation of PACSIN2 by disrupting the interaction between PACSIN2 and PRKCA. Interacts (via N-terminus) with host SRC kinase (via SH2 domain). Interacts with most Src-family kinases. Interacts with host IFI27 and SKP2; promotes the ubiquitin-mediated proteasomal degradation of NS5A. Interacts with host GPS2. Interacts with host TNFRSF21; this interaction allows the modulation by the virus of JNK, p38 MAPK, STAT3, and Akt signaling pathways in a DR6-dependent manner. Interacts (via N-terminus) with host CIDEB (via N-terminus); this interaction seems to regulate the association of HCV particles with APOE. Interacts with host CHKA/Choline Kinase-alpha; CHKA bridges host PI4KA and NS5A and potentiates NS5A-stimulated PI4KA activity, which then facilitates the targeting of the ternary complex to the ER for viral replication. Interacts with host SPSB2 (via C-terminus); this interaction targets NS5A for ubiquitination and degradation. Interacts with host RAB18; this interaction may promote the association of NS5A and other replicase components with lipid droplets. Interacts (via region D2) with host PPIA/CYPA; the interaction stimulates RNA-binding ability of NS5A and is dependent on the peptidyl-prolyl cis-trans isomerase activity of PPIA/CYPA. Interacts with host TRIM14; this interaction induces the degradation of NS5A. As to quaternary structure, homooligomer. Interacts with non-structural protein 5A. Interacts with host VAPB. Interacts with host PRK2/PKN2. Interacts with host HNRNPA1 and SEPT6; these interactions facilitate viral replication. Part of the replication complex composed of NS2, NS3, NS4A, NS4B, NS5A and the RNA-directed RNA polymerase. Zn(2+) serves as cofactor. It depends on Mg(2+) as a cofactor. Post-translationally, specific enzymatic cleavages in vivo yield mature proteins. The structural proteins, core, E1, E2 and p7 are produced by proteolytic processing by host signal peptidases. The core protein precursor is synthesized as a 23 kDa, which is retained in the ER membrane through the hydrophobic signal peptide. Cleavage by the signal peptidase releases the 21 kDa mature core protein. The cleavage of the core protein precursor occurs between aminoacids 176 and 188 but the exact cleavage site is not known. Some degraded forms of the core protein appear as well during the course of infection. The other proteins (p7, NS2, NS3, NS4A, NS4B, NS5A and NS5B) are cleaved by the viral proteases. Autoprocessing between NS2 and NS3 is mediated by the NS2 cysteine protease catalytic domain and regulated by the NS3 N-terminal domain. Phosphorylated by host PKC and PKA. In terms of processing, ubiquitinated; mediated by UBE3A and leading to core protein subsequent proteasomal degradation. Post-translationally, highly N-glycosylated. Palmitoylation is required for NS2/3 autoprocessing and E2 recruitment to membranes. In terms of processing, palmitoylated. This modification may play a role in its polymerization or in protein-protein interactions. Post-translationally, phosphorylated on serines in a basal form termed p56. p58 is a hyperphosphorylated form of p56. p56 and p58 coexist in the cell in roughly equivalent amounts. Hyperphosphorylation is dependent on the presence of NS4A. Host CSNK1A1/CKI-alpha or RPS6KB1 kinases may be responsible for NS5A phosphorylation. Tyrosine phosphorylation is essential for the interaction with host SRC. In terms of processing, ubiquitinated. Ubiquitination, most probably at Lys-2350, mediated by host IFI27 and SKP2 leads to proteasomal degradation, restricting viral infection. Ubiquitination by host TRIM22 leads to interruption of viral replication. Post-translationally, the N-terminus is phosphorylated by host PRK2/PKN2.

Its subcellular location is the host endoplasmic reticulum membrane. The protein resides in the host mitochondrion membrane. It localises to the virion. The protein localises to the host cytoplasm. It is found in the host nucleus. Its subcellular location is the host lipid droplet. The protein resides in the virion membrane. It localises to the host mitochondrion. The protein localises to the host cell membrane. It is found in the host perinuclear region. The catalysed reaction is Hydrolysis of four peptide bonds in the viral precursor polyprotein, commonly with Asp or Glu in the P6 position, Cys or Thr in P1 and Ser or Ala in P1'.. It carries out the reaction a ribonucleoside 5'-triphosphate + H2O = a ribonucleoside 5'-diphosphate + phosphate + H(+). The enzyme catalyses ATP + H2O = ADP + phosphate + H(+). It catalyses the reaction RNA(n) + a ribonucleoside 5'-triphosphate = RNA(n+1) + diphosphate. Its activity is regulated as follows. Inhibited by the antiviral drug hexamethylene amiloride. Inhibition by amantadine appears to be genotype-dependent. Also inhibited by long-alkyl-chain iminosugar derivatives. Activity is up-regulated by PRK2/PKN2-mediated phosphorylation. Its function is as follows. Packages viral RNA to form a viral nucleocapsid, and promotes virion budding. Participates in the viral particle production as a result of its interaction with the non-structural protein 5A. Binds RNA and may function as a RNA chaperone to induce the RNA structural rearrangements taking place during virus replication. Modulates viral translation initiation by interacting with viral IRES and 40S ribosomal subunit. Affects various cell signaling pathways, host immunity and lipid metabolism. Prevents the establishment of cellular antiviral state by blocking the interferon-alpha/beta (IFN-alpha/beta) and IFN-gamma signaling pathways and by blocking the formation of phosphorylated STAT1 and promoting ubiquitin-mediated proteasome-dependent degradation of STAT1. Activates STAT3 leading to cellular transformation. Regulates the activity of cellular genes, including c-myc and c-fos. May repress the promoter of p53, and sequester CREB3 and SP110 isoform 3/Sp110b in the cytoplasm. Represses cell cycle negative regulating factor CDKN1A, thereby interrupting an important check point of normal cell cycle regulation. Targets transcription factors involved in the regulation of inflammatory responses and in the immune response: suppresses TNF-induced NF-kappa-B activation, and activates AP-1. Binds to dendritic cells (DCs) via C1QR1, resulting in down-regulation of T-lymphocytes proliferation. Alters lipid metabolism by interacting with hepatocellular proteins involved in lipid accumulation and storage. Induces up-regulation of FAS promoter activity, and thereby contributes to the increased triglyceride accumulation in hepatocytes (steatosis). Forms a heterodimer with envelope glycoprotein E2, which mediates virus attachment to the host cell, virion internalization through clathrin-dependent endocytosis and fusion with host membrane. Fusion with the host cell is most likely mediated by both E1 and E2, through conformational rearrangements of the heterodimer required for fusion rather than a classical class II fusion mechanism. E1/E2 heterodimer binds host apolipoproteins such as APOB and ApoE thereby forming a lipo-viro-particle (LVP). APOE associated to the LVP allows the initial virus attachment to cell surface receptors such as the heparan sulfate proteoglycans (HSPGs), syndecan-1 (SDC1), syndecan-1 (SDC2), the low-density lipoprotein receptor (LDLR) and scavenger receptor class B type I (SCARB1). The cholesterol transfer activity of SCARB1 allows E2 exposure and binding of E2 to SCARB1 and the tetraspanin CD81. E1/E2 heterodimer binding on CD81 activates the epithelial growth factor receptor (EGFR) signaling pathway. Diffusion of the complex E1-E2-EGFR-SCARB1-CD81 to the cell lateral membrane allows further interaction with Claudin 1 (CLDN1) and occludin (OCLN) to finally trigger HCV entry. In terms of biological role, forms a heterodimer with envelope glycoprotein E1, which mediates virus attachment to the host cell, virion internalization through clathrin-dependent endocytosis and fusion with host membrane. Fusion with the host cell is most likely mediated by both E1 and E2, through conformational rearrangements of the heterodimer required for fusion rather than a classical class II fusion mechanism. The interaction between envelope glycoprotein E2 and host apolipoprotein E/APOE allows the proper assembly, maturation and infectivity of the viral particles. This interaction is probably promoted via the up-regulation of cellular autophagy by the virus. E1/E2 heterodimer binds host apolipoproteins such as APOB and APOE thereby forming a lipo-viro-particle (LVP). APOE associated to the LVP allows the initial virus attachment to cell surface receptors such as the heparan sulfate proteoglycans (HSPGs), syndecan-1 (SDC1), syndecan-1 (SDC2), the low-density lipoprotein receptor (LDLR) and scavenger receptor class B type I (SCARB1). The cholesterol transfer activity of SCARB1 allows E2 exposure and binding of E2 to SCARB1 and the tetraspanin CD81. E1/E2 heterodimer binding on CD81 activates the epithelial growth factor receptor (EGFR) signaling pathway. Diffusion of the complex E1-E2-EGFR-SCARB1-CD81 to the cell lateral membrane allows further interaction with Claudin 1 (CLDN1) and occludin (OCLN) to finally trigger HCV entry. Inhibits host EIF2AK2/PKR activation, preventing the establishment of an antiviral state. Viral ligand for CD209/DC-SIGN and CLEC4M/DC-SIGNR, which are respectively found on dendritic cells (DCs), and on liver sinusoidal endothelial cells and macrophage-like cells of lymph node sinuses. These interactions allow the capture of circulating HCV particles by these cells and subsequent facilitated transmission to permissive cells such as hepatocytes and lymphocyte subpopulations. The interaction between E2 and host amino acid transporter complex formed by SLC3A2 and SLC7A5/LAT1 may facilitate viral entry into host cell. Functionally, ion channel protein that acts as a viroporin and plays an essential role in the assembly, envelopment and secretion of viral particles. Regulates the host cell secretory pathway, which induces the intracellular retention of viral glycoproteins and favors assembly of viral particles. Creates a pore in acidic organelles and releases Ca(2+) and H(+) in the cytoplasm of infected cells, leading to a productive viral infection. High levels of cytoplasmic Ca(2+) may trigger membrane trafficking and transport of viral ER-associated proteins to viroplasms, sites of viral genome replication. This ionic imbalance induces the assembly of the inflammasome complex, which triggers the maturation of pro-IL-1beta into IL-1beta through the action of caspase-1. Targets also host mitochondria and induces mitochondrial depolarization. In addition of its role as a viroporin, acts as a lipid raft adhesion factor. Its function is as follows. Cysteine protease required for the proteolytic auto-cleavage between the non-structural proteins NS2 and NS3. The N-terminus of NS3 is required for the function of NS2 protease (active region NS2-3). Promotes the initiation of viral particle assembly by mediating the interaction between structural and non-structural proteins. Displays three enzymatic activities: serine protease with a chymotrypsin-like fold, NTPase and RNA helicase. NS3 serine protease, in association with NS4A, is responsible for the cleavages of NS3-NS4A, NS4A-NS4B, NS4B-NS5A and NS5A-NS5B. The NS3/NS4A complex prevents phosphorylation of host IRF3, thus preventing the establishment of dsRNA induced antiviral state. The NS3/NS4A complex induces host amino acid transporter component SLC3A2, thus contributing to HCV propagation. NS3 RNA helicase binds to RNA and unwinds both dsDNA and dsRNA in the 3' to 5' direction, and likely resolves RNA complicated stable secondary structures in the template strand. Binds a single ATP and catalyzes the unzipping of a single base pair of dsRNA. Inhibits host antiviral proteins TBK1 and IRF3 thereby preventing the establishment of an antiviral state. Cleaves host MAVS/CARDIF thereby preventing the establishment of an antiviral state. Cleaves host TICAM1/TRIF, thereby disrupting TLR3 signaling and preventing the establishment of an antiviral state. In terms of biological role, peptide cofactor which forms a non-covalent complex with the N-terminal of NS3 serine protease. The NS3/NS4A complex prevents phosphorylation of host IRF3, thus preventing the establishment of dsRNA induced antiviral state. The NS3/NS4A complex induces host amino acid transporter component SLC3A2, thus contributing to HCV propagation. Functionally, induces a specific membrane alteration that serves as a scaffold for the virus replication complex. This membrane alteration gives rise to the so-called ER-derived membranous web that contains the replication complex. NS4B self-interaction contributes to its function in membranous web formation. Promotes host TRIF protein degradation in a CASP8-dependent manner thereby inhibiting host TLR3-mediated interferon signaling. Disrupts the interaction between STING and TBK1 contributing to the inhibition of interferon signaling. Its function is as follows. Phosphorylated protein that is indispensable for viral replication and assembly. Both hypo- and hyperphosphorylated states are required for the viral life cycle. The hyperphosphorylated form of NS5A is an inhibitor of viral replication. Involved in RNA-binding and especially in binding to the viral genome. Zinc is essential for RNA-binding. Participates in the viral particle production as a result of its interaction with the mature viral core protein. Its interaction with host VAPB may target the viral replication complex to vesicles. Down-regulates viral IRES translation initiation. Mediates interferon resistance, presumably by interacting with and inhibiting host EIF2AK2/PKR. Prevents BIN1-induced apoptosis. Acts as a transcriptional activator of some host genes important for viral replication when localized in the nucleus. Via the interaction with host PACSIN2, modulates lipid droplet formation in order to promote virion assembly. Modulates TNFRSF21/DR6 signaling pathway for viral propagation. RNA-dependent RNA polymerase that performs primer-template recognition and RNA synthesis during viral replication. Initiates RNA transcription/replication at a flavin adenine dinucleotide (FAD), resulting in a 5'- FAD cap on viral RNAs. In this way, recognition of viral 5' RNA by host pattern recognition receptors can be bypassed, thereby evading activation of antiviral pathways. This Homo sapiens (Human) protein is Genome polyprotein.